Here is a 199-residue protein sequence, read N- to C-terminus: Peroxiredoxin-1 (199 aa).

S2 carries the N-acetylserine modification. One can recognise a Thioredoxin domain in the interval 6-165 (AKIGYPAPNF…ILRLVQAFQF (160 aa)). An N6-acetyllysine; alternate modification is found at K7. K7 is covalently cross-linked (Glycyl lysine isopeptide (Lys-Gly) (interchain with G-Cter in SUMO2); alternate). An N6-acetyllysine modification is found at K16. A Phosphoserine modification is found at S32. Catalysis depends on C52, which acts as the Cysteine sulfenic acid (-SOH) intermediate. A Phosphothreonine modification is found at T90. K120 participates in a covalent cross-link: Glycyl lysine isopeptide (Lys-Gly) (interchain with G-Cter in SUMO2). K136 carries the N6-acetyllysine modification. The interval 176–199 (GWKPGSDTIKPDVQKSKEYFSKQK) is disordered. Positions 184–199 (IKPDVQKSKEYFSKQK) are enriched in basic and acidic residues. A Glycyl lysine isopeptide (Lys-Gly) (interchain with G-Cter in SUMO1) cross-link involves residue K185. K197 bears the N6-acetyllysine mark.

The protein belongs to the peroxiredoxin family. AhpC/Prx1 subfamily. In terms of assembly, homodimer; disulfide-linked, upon oxidation. 5 homodimers assemble to form a ring-like decamer. Interacts with GDPD5; forms a mixed-disulfide with GDPD5. Interacts with SESN1 and SESN2. Interacts with FAM107A. Phosphorylated on Thr-90 during the M-phase, which leads to a decrease in enzymatic activity. In terms of processing, acetylation increases reducing activity and resistance to superoxidation. Deacetylated by HDAC6 which decreases reducing activity.

It localises to the cytoplasm. The catalysed reaction is a hydroperoxide + [thioredoxin]-dithiol = an alcohol + [thioredoxin]-disulfide + H2O. In terms of biological role, thiol-specific peroxidase that catalyzes the reduction of hydrogen peroxide and organic hydroperoxides to water and alcohols, respectively. Plays a role in cell protection against oxidative stress by detoxifying peroxides and as sensor of hydrogen peroxide-mediated signaling events. Might participate in the signaling cascades of growth factors and tumor necrosis factor-alpha by regulating the intracellular concentrations of H(2)O(2). Reduces an intramolecular disulfide bond in GDPD5 that gates the ability to GDPD5 to drive postmitotic motor neuron differentiation. The protein is Peroxiredoxin-1 (PRDX1) of Cricetulus griseus (Chinese hamster).